We begin with the raw amino-acid sequence, 352 residues long: C5a anaphylatoxin chemotactic receptor 1 (352 aa).

Over 1–38 (MASMNFSPPEYPDYGTATLDPNIFVDESLNTPKLSVPD) the chain is Extracellular. 2 positions are modified to sulfotyrosine: Tyr-11 and Tyr-14. The chain crosses the membrane as a helical span at residues 39–65 (MIALVIFVMVFLVGVPGNFLVVWVTGF). At 66–70 (EVRRT) the chain is on the cytoplasmic side. The helical transmembrane segment at 71–94 (INAIWFLNLAVADLLSCLALPILF) threads the bilayer. The Extracellular portion of the chain corresponds to 95-111 (SSIVQQGYWPFGNAACR). Cys-110 and Cys-189 form a disulfide bridge. Residues 112–133 (ILPSLILLNMYASILLLTTISA) traverse the membrane as a helical segment. At 134–154 (DRFVLVFNPIWCQNYRGPQLA) the chain is on the cytoplasmic side. A helical membrane pass occupies residues 155–175 (WAACSVAWAVALLLTVPSFIF). Over 176–202 (RGVHTEYFPFWMTCGVDYSGVGVLVER) the chain is Extracellular. Residues 203-228 (GVAILRLLMGFLGPLVILSICYTFLL) traverse the membrane as a helical segment. The Cytoplasmic segment spans residues 229–244 (IRTWSRKATRSTKTLK). A helical transmembrane segment spans residues 245–267 (VVVAVVVSFFVLWLPYQVTGMMM). Topologically, residues 268–284 (ALFYKHSESFRRVSRLD) are extracellular. A helical transmembrane segment spans residues 285-305 (SLCVAVAYINCCINPIIYVLA). Topologically, residues 306-352 (AQGFHSRFLKSLPARLRQVLAEESVGRDSKSITLSTVDTPAQKSQGV) are cytoplasmic. Residues Ser-316, Ser-329, Ser-334, Ser-336, and Ser-340 each carry the phosphoserine modification.

Belongs to the G-protein coupled receptor 1 family. As to quaternary structure, homodimer. May also form higher-order oligomers. Interacts (when phosphorylated) with ARRB1 and ARRB2; the interaction is associated with internalization of C5aR. Sulfation plays a critical role in the association of C5aR with C5a, but no significant role in the ability of the receptor to transduce a signal and mobilize calcium in response to a small peptide agonist. Post-translationally, phosphorylated on serine residues in response to C5a binding, resulting in internalization of the receptor and short-term desensitization to C5a.

The protein resides in the cell membrane. The protein localises to the cytoplasmic vesicle. Functionally, receptor for the chemotactic and inflammatory peptide anaphylatoxin C5a. The ligand interacts with at least two sites on the receptor: a high-affinity site on the extracellular N-terminus, and a second site in the transmembrane region which activates downstream signaling events. Receptor activation stimulates chemotaxis, granule enzyme release, intracellular calcium release and superoxide anion production. This Canis lupus familiaris (Dog) protein is C5a anaphylatoxin chemotactic receptor 1 (C5AR1).